Here is a 283-residue protein sequence, read N- to C-terminus: Movement protein (283 aa).

This sequence belongs to the cucumovirus movement protein family.

It localises to the host cell junction. The protein localises to the host plasmodesma. Functionally, transports viral genome to neighboring plant cells directly through plasmosdesmata, without any budding. The movement protein allows efficient cell to cell propagation, by bypassing the host cell wall barrier. Acts by forming a tubular structure at the host plasmodesmata, enlarging it enough to allow free passage of virion capsids. The polypeptide is Movement protein (Cucumis sativus (Cucumber)).